Reading from the N-terminus, the 153-residue chain is Regulatory protein RecX (153 aa).

This sequence belongs to the RecX family.

It localises to the cytoplasm. Functionally, modulates RecA activity. In Neisseria gonorrhoeae (strain ATCC 700825 / FA 1090), this protein is Regulatory protein RecX.